Reading from the N-terminus, the 435-residue chain is MLDSKLLRTELDETAAKLARRGFKLDVETIRKLEEQRKSIQVEVENLQSTRNSISKQIGQKMAAGDKEGAEEIKKQIGTLGSDLDAKKVELEQVMAQLDEFTLSVPNIPDDEVPDGKDENDNVEISRWGEPKTYDFELKDHVDLGEMGGGLDFASAVKITGARFIVMKGQFARLHRAIAQFMLDLHTEEHGYTEMYVPYLVNSDSLFGTGQLPKFGKDLFHTEPLVEKVNDEEPRKLSLIPTAEVPVTNLVRDTISDEADLPIKMTAHTPCFRSEAGSYGRDTRGLIRMHQFDKVELVQITKPEDSMNALEELTGHAEKVLQLLELPYRKVVLCTGDMGFGARKTYDLEVWVPAQETYREISSCSNMWDFQARRMQARFRRKGEKKPELVHTLNGSGLAVGRTMVAILENNQEADGRIAIPTVLQKYMAGATHIG.

242–244 (TAE) contacts L-serine. 273-275 (RSE) lines the ATP pocket. E296 contributes to the L-serine binding site. 360 to 363 (EISS) is an ATP binding site. S396 contributes to the L-serine binding site.

It belongs to the class-II aminoacyl-tRNA synthetase family. Type-1 seryl-tRNA synthetase subfamily. In terms of assembly, homodimer. The tRNA molecule binds across the dimer.

The protein localises to the cytoplasm. The enzyme catalyses tRNA(Ser) + L-serine + ATP = L-seryl-tRNA(Ser) + AMP + diphosphate + H(+). The catalysed reaction is tRNA(Sec) + L-serine + ATP = L-seryl-tRNA(Sec) + AMP + diphosphate + H(+). It participates in aminoacyl-tRNA biosynthesis; selenocysteinyl-tRNA(Sec) biosynthesis; L-seryl-tRNA(Sec) from L-serine and tRNA(Sec): step 1/1. Functionally, catalyzes the attachment of serine to tRNA(Ser). Is also able to aminoacylate tRNA(Sec) with serine, to form the misacylated tRNA L-seryl-tRNA(Sec), which will be further converted into selenocysteinyl-tRNA(Sec). This chain is Serine--tRNA ligase, found in Vibrio campbellii (strain ATCC BAA-1116).